The sequence spans 628 residues: U-box domain-containing protein 10 (628 aa).

Positions 242–316 (TIPEDFLCPI…SQWCTKHNIE (75 aa)) constitute a U-box domain. 5 ARM repeats span residues 373–413 (TDNR…NLSI), 415–454 (EHNKELIMLAGAVTSIVLVLRAGSMEARENAAATLFSLSL), 456–495 (DENKIIIGASGAIMALVDLLQYGSVRGKKDAATALFNLCI), 497–537 (QGNK…VLAS), and 539–578 (QVAKTAILRANAIPPLIDCLQKDQPRNRENAAAILLCLCK).

It catalyses the reaction S-ubiquitinyl-[E2 ubiquitin-conjugating enzyme]-L-cysteine + [acceptor protein]-L-lysine = [E2 ubiquitin-conjugating enzyme]-L-cysteine + N(6)-ubiquitinyl-[acceptor protein]-L-lysine.. The protein operates within protein modification; protein ubiquitination. Its function is as follows. Functions as an E3 ubiquitin ligase. This Arabidopsis thaliana (Mouse-ear cress) protein is U-box domain-containing protein 10 (PUB10).